The sequence spans 394 residues: MASIVQPSPTFPALNLRRSSLIRPPSSVRFPLKCNAADPYKFDGGNSAGFHLLTGDTVPASFSRTRLEDSIYQNTTRLRIFSGTANPILAQEISCYLGLDLGKIKIKRFADGEIYVQLQESVRGCDVFLVQPTCPPANENLMELLVMIDACRRASAKTITAVIPYFGYARADRKTQGRESIAAKLVANLITQSGADRVLACDLHSGQSMGYFDIPVDHVYGQPVILDYLASKAISSEDLVVVSPDVGGVARARAFAKKLSDAPLAIVDKRRHGHNVAEVMNLIGDVKGKVAIMVDDMIDTAGTISKGAALLHQEGAREVYACTTHAVFSPPAISRLSSGLFQEVIITNTIPLSEKNYFPQLTVLSVANLLGETIWRVHDDCSGAIEPFSTLGID.

The N-terminal 33 residues, 1-33 (MASIVQPSPTFPALNLRRSSLIRPPSSVRFPLK), are a transit peptide targeting the chloroplast. Mg(2+)-binding residues include Asp202, His204, Asp213, and Asp217. Residues 288 to 303 (GKVAIMVDDMIDTAGT) are binding of phosphoribosylpyrophosphate.

The protein belongs to the ribose-phosphate pyrophosphokinase family.

Its subcellular location is the plastid. It is found in the chloroplast. The enzyme catalyses D-ribose 5-phosphate + ATP = 5-phospho-alpha-D-ribose 1-diphosphate + AMP + H(+). The sequence is that of Ribose-phosphate pyrophosphokinase 5, chloroplastic (PRS5) from Arabidopsis thaliana (Mouse-ear cress).